A 505-amino-acid chain; its full sequence is GDP-Man:Man(3)GlcNAc(2)-PP-Dol alpha-1,2-mannosyltransferase (505 aa).

The Lumenal segment spans residues Met-1–Glu-3. The helical transmembrane segment at Leu-4 to Leu-24 threads the bilayer. The Cytoplasmic portion of the chain corresponds to Ala-25–Arg-145. The segment at residues Phe-146–Phe-166 is an intramembrane region (helical). The Cytoplasmic portion of the chain corresponds to Val-167–His-402. An intramembrane region (helical) is located at residues Phe-403–Ala-423. Residues Gly-424–Asn-505 are Cytoplasmic-facing.

This sequence belongs to the glycosyltransferase group 1 family.

It is found in the endoplasmic reticulum membrane. It catalyses the reaction an alpha-D-Man-(1-&gt;3)-[alpha-D-Man-(1-&gt;6)]-beta-D-Man-(1-&gt;4)-beta-D-GlcNAc-(1-&gt;4)-alpha-D-GlcNAc-diphospho-di-trans,poly-cis-dolichol + 2 GDP-alpha-D-mannose = an alpha-D-Man-(1-&gt;2)-alpha-D-Man-(1-&gt;2)-alpha-D-Man-(1-&gt;3)-[alpha-D-Man-(1-&gt;6)]-beta-D-Man-(1-&gt;4)-beta-D-GlcNAc-(1-&gt;4)-alpha-D-GlcNAc-diphospho-di-trans,poly-cis-dolichol + 2 GDP + 2 H(+). Its pathway is protein modification; protein glycosylation. Its function is as follows. GDP-Man:Man(3)GlcNAc(2)-PP-Dol alpha-1,2-mannosyltransferase that operates in the biosynthetic pathway of dolichol-linked oligosaccharides, the glycan precursors employed in protein asparagine (N)-glycosylation. The assembly of dolichol-linked oligosaccharides begins on the cytosolic side of the endoplasmic reticulum membrane and finishes in its lumen. The sequential addition of sugars to dolichol pyrophosphate produces dolichol-linked oligosaccharides containing fourteen sugars, including two GlcNAcs, nine mannoses and three glucoses. Once assembled, the oligosaccharide is transferred from the lipid to nascent proteins by oligosaccharyltransferases. Catalyzes, on the cytoplasmic face of the endoplasmic reticulum, the addition of the fourth and fifth mannose residues to the dolichol-linked oligosaccharide chain, to produce Man(5)GlcNAc(2)-PP-dolichol core oligosaccharide. The polypeptide is GDP-Man:Man(3)GlcNAc(2)-PP-Dol alpha-1,2-mannosyltransferase (alg11) (Dictyostelium discoideum (Social amoeba)).